Here is a 177-residue protein sequence, read N- to C-terminus: Adenine phosphoribosyltransferase (177 aa).

It belongs to the purine/pyrimidine phosphoribosyltransferase family. Homodimer.

Its subcellular location is the cytoplasm. It carries out the reaction AMP + diphosphate = 5-phospho-alpha-D-ribose 1-diphosphate + adenine. Its pathway is purine metabolism; AMP biosynthesis via salvage pathway; AMP from adenine: step 1/1. Its function is as follows. Catalyzes a salvage reaction resulting in the formation of AMP, that is energically less costly than de novo synthesis. This Cutibacterium acnes (strain DSM 16379 / KPA171202) (Propionibacterium acnes) protein is Adenine phosphoribosyltransferase.